A 107-amino-acid chain; its full sequence is MEKVLKSLFETIENRKQSPLQGSYTNYLLTKGADKILKKIGEECTEVVIAAKNDNKEEIVKEMVDVLYHCFVLLVAKNISLEEIEKEVRERTGKISKTEERKEIDTL.

Belongs to the PRA-PH family.

The protein resides in the cytoplasm. It catalyses the reaction 1-(5-phospho-beta-D-ribosyl)-ATP + H2O = 1-(5-phospho-beta-D-ribosyl)-5'-AMP + diphosphate + H(+). The protein operates within amino-acid biosynthesis; L-histidine biosynthesis; L-histidine from 5-phospho-alpha-D-ribose 1-diphosphate: step 2/9. The chain is Phosphoribosyl-ATP pyrophosphatase from Bacillus cytotoxicus (strain DSM 22905 / CIP 110041 / 391-98 / NVH 391-98).